An 896-amino-acid polypeptide reads, in one-letter code: Alanine--tRNA ligase (896 aa).

Residues His574, His578, Cys677, and His681 each coordinate Zn(2+).

Belongs to the class-II aminoacyl-tRNA synthetase family. Requires Zn(2+) as cofactor.

The protein localises to the cytoplasm. It catalyses the reaction tRNA(Ala) + L-alanine + ATP = L-alanyl-tRNA(Ala) + AMP + diphosphate. Catalyzes the attachment of alanine to tRNA(Ala) in a two-step reaction: alanine is first activated by ATP to form Ala-AMP and then transferred to the acceptor end of tRNA(Ala). Also edits incorrectly charged Ser-tRNA(Ala) and Gly-tRNA(Ala) via its editing domain. This Mycoplasma mycoides subsp. mycoides SC (strain CCUG 32753 / NCTC 10114 / PG1) protein is Alanine--tRNA ligase.